The chain runs to 391 residues: Pyruvate dehydrogenase E1 component subunit alpha, testis-specific form, mitochondrial (391 aa).

The transit peptide at 1 to 30 directs the protein to the mitochondrion; that stretch reads MRKMLATVLSQVFSGMVQKPALRGLLSSLK. H93, Y119, R120, A158, G166, V168, D197, G198, A199, N226, and Y228 together coordinate pyruvate. Thiamine diphosphate-binding residues include Y119 and R120. 6 residues coordinate thiamine diphosphate: G166, V168, D197, G198, A199, and N226. D197 is a Mg(2+) binding site. N226 and Y228 together coordinate Mg(2+). H293 provides a ligand contact to thiamine diphosphate. Residues S294 and S296 each carry the phosphoserine modification. A Phosphoserine; by PDK3 modification is found at S301.

Heterotetramer of two PDHA2 and two PDHB subunits. The heterotetramer interacts with DLAT, and is part of the multimeric pyruvate dehydrogenase complex that contains multiple copies of pyruvate dehydrogenase (E1), dihydrolipoamide acetyltransferase (DLAT, E2) and lipoamide dehydrogenase (DLD, E3). These subunits are bound to an inner core composed of about 48 DLAT and 12 PDHX molecules. It depends on thiamine diphosphate as a cofactor. Requires Mg(2+) as cofactor. Testis.

The protein resides in the mitochondrion matrix. It carries out the reaction N(6)-[(R)-lipoyl]-L-lysyl-[protein] + pyruvate + H(+) = N(6)-[(R)-S(8)-acetyldihydrolipoyl]-L-lysyl-[protein] + CO2. Its activity is regulated as follows. Pyruvate dehydrogenase activity is inhibited by phosphorylation of PDHA2; it is reactivated by dephosphorylation. Its function is as follows. The pyruvate dehydrogenase complex catalyzes the overall conversion of pyruvate to acetyl-CoA and CO(2), and thereby links the glycolytic pathway to the tricarboxylic cycle. The chain is Pyruvate dehydrogenase E1 component subunit alpha, testis-specific form, mitochondrial (Pdha2) from Rattus norvegicus (Rat).